The chain runs to 248 residues: NAD-dependent protein deacylase 2 (248 aa).

One can recognise a Deacetylase sirtuin-type domain in the interval 1–248 (MLQAASALRH…HVMAELISHI (248 aa)). NAD(+)-binding positions include 19–38 (GAGL…GGLY) and 102–105 (QNVD). The active-site Proton acceptor is the His-122. Zn(2+)-binding residues include Cys-130, Cys-133, Cys-152, and Cys-155. Residues 193 to 195 (GTT), 219 to 221 (NPQ), and Ala-237 contribute to the NAD(+) site.

The protein belongs to the sirtuin family. Class III subfamily. The cofactor is Zn(2+).

It localises to the cytoplasm. The catalysed reaction is N(6)-acetyl-L-lysyl-[protein] + NAD(+) + H2O = 2''-O-acetyl-ADP-D-ribose + nicotinamide + L-lysyl-[protein]. Its function is as follows. NAD-dependent protein deacetylase which modulates the activities of several proteins which are inactive in their acetylated form. This Pseudomonas syringae pv. tomato (strain ATCC BAA-871 / DC3000) protein is NAD-dependent protein deacylase 2 (cobB2).